The chain runs to 327 residues: NADPH-dependent aldose reductase GRE3 (327 aa).

The Proton donor role is filled by tyrosine 49. Histidine 111 lines the substrate pocket. Residue 219–286 coordinates NADP(+); that stretch reads SSFGPQSFIE…SSKKERLLGN (68 aa).

Belongs to the aldo/keto reductase family. In terms of assembly, monomer.

It is found in the cytoplasm. The protein localises to the nucleus. The catalysed reaction is an alditol + NAD(+) = an aldose + NADH + H(+). It carries out the reaction an alditol + NADP(+) = an aldose + NADPH + H(+). Its function is as follows. Aldose reductase with a broad substrate specificity. Reduces the cytotoxic compound methylglyoxal (MG) to acetol and (R)-lactaldehyde under stress conditions. MG is synthesized via a bypath of glycolysis from dihydroxyacetone phosphate and is believed to play a role in cell cycle regulation and stress adaptation. In pentose-fermenting yeasts, aldose reductase catalyzes the reduction of xylose into xylitol. The purified enzyme catalyzes this reaction, but the inability of S.cerevisiae to grow on xylose as sole carbon source indicates that the physiological function is more likely methylglyoxal reduction. The sequence is that of NADPH-dependent aldose reductase GRE3 from Saccharomyces cerevisiae (strain ATCC 204508 / S288c) (Baker's yeast).